Consider the following 362-residue polypeptide: 3-dehydroquinate synthase (362 aa).

Residues 71–76 (DGEQNK), 105–109 (GVIGD), 129–130 (TT), lysine 142, and lysine 151 each bind NAD(+). Residues glutamate 184, histidine 247, and histidine 264 each contribute to the Zn(2+) site.

This sequence belongs to the sugar phosphate cyclases superfamily. Dehydroquinate synthase family. Co(2+) serves as cofactor. The cofactor is Zn(2+). Requires NAD(+) as cofactor.

It is found in the cytoplasm. The catalysed reaction is 7-phospho-2-dehydro-3-deoxy-D-arabino-heptonate = 3-dehydroquinate + phosphate. It participates in metabolic intermediate biosynthesis; chorismate biosynthesis; chorismate from D-erythrose 4-phosphate and phosphoenolpyruvate: step 2/7. Functionally, catalyzes the conversion of 3-deoxy-D-arabino-heptulosonate 7-phosphate (DAHP) to dehydroquinate (DHQ). The polypeptide is 3-dehydroquinate synthase (Blochmanniella pennsylvanica (strain BPEN)).